Here is a 2062-residue protein sequence, read N- to C-terminus: Ankyrin repeat domain-containing protein 12 (2062 aa).

Disordered regions lie at residues 1-119 (MPKS…GNKK) and 145-188 (ARDN…GETP). Positions 9 to 20 (PIQSENSDSDSN) are enriched in polar residues. Composition is skewed to basic and acidic residues over residues 41–57 (PKIE…EKSS) and 100–117 (YSEK…EAGN). Residues 145–172 (ARDNSPDSTPNHPSQTTPAQKKTPSSSS) are compositionally biased toward polar residues. The residue at position 149 (Ser149) is a Phosphoserine. Residues 173 to 187 (RQKDKVNKRNERGET) are compositionally biased toward basic and acidic residues. ANK repeat units follow at residues 184-213 (RGET…NVNV), 217-246 (AGWT…DVNT), and 250-280 (DDDT…PFQA). 8 disordered regions span residues 301-338 (KREV…TEKD), 409-501 (KSFK…TRIT), 538-577 (ISTG…MSLQ), 609-683 (QKDF…DSAK), 727-788 (EKNI…FTSL), 812-1073 (EKHI…LVND), 1097-1227 (KHKE…RPPV), and 1328-1350 (EESN…KPEV). Acidic residues predominate over residues 306 to 318 (LSDDDESYTDSEE). Composition is skewed to polar residues over residues 319–328 (AQSVNPSSVD) and 437–454 (KKIS…NSDM). Over residues 455–467 (QTKKEYVVSGEHK) the composition is skewed to basic and acidic residues. Residues 468–480 (QKGKVKRKLKNQN) show a composition bias toward basic residues. Residues 481–498 (KNKENQELKQEKEGKENT) are compositionally biased toward basic and acidic residues. Ser543 is modified (phosphoserine). The segment covering 565–575 (TCLSPGSSEMS) has biased composition (polar residues). Composition is skewed to basic and acidic residues over residues 609 to 631 (QKDF…DHSP), 639 to 649 (TLKKMDKEGKT), 658 to 683 (KERE…DSAK), 727 to 784 (EKNI…KDSE), 812 to 969 (EKHI…DKES), 977 to 1037 (HIQE…KDKI), 1061 to 1072 (KDTRPKEKRLVN), and 1103 to 1157 (KQKE…KQPK). A Phosphoserine modification is found at Ser630. Ser861 bears the Phosphoserine mark. The segment covering 1161–1189 (SNRSQSVDTKNVMTLGKSSFVSDNSLNRS) has biased composition (polar residues). Residues 1200-1213 (SSRSVSMISVASSE) show a composition bias toward low complexity. Residues 1328–1344 (EESNQGSLLTVPGDTSP) are compositionally biased toward polar residues. The residue at position 1401 (Ser1401) is a Phosphoserine. Disordered regions lie at residues 1721–1744 (NAED…NTMA) and 1756–1795 (LLSE…VPQP). The segment covering 1729 to 1744 (NQIPQRMTRNKANTMA) has biased composition (polar residues).

Interacts with the PAS region of the p160 coactivators.

The protein resides in the nucleus. May recruit HDACs to the p160 coactivators/nuclear receptor complex to inhibit ligand-dependent transactivation. In Homo sapiens (Human), this protein is Ankyrin repeat domain-containing protein 12 (ANKRD12).